A 456-amino-acid polypeptide reads, in one-letter code: Tyrosine phenol-lyase (456 aa).

The residue at position 257 (lysine 257) is an N6-(pyridoxal phosphate)lysine.

Belongs to the beta-eliminating lyase family. In terms of assembly, homotetramer. It depends on pyridoxal 5'-phosphate as a cofactor. Post-translationally, contains L-DOPA (3',4'-dihydroxyphenylalanine).

The protein localises to the cytoplasm. The enzyme catalyses L-tyrosine + H2O = phenol + pyruvate + NH4(+). In Enterobacter agglomerans (Erwinia herbicola), this protein is Tyrosine phenol-lyase (tpl).